The following is a 364-amino-acid chain: Lipid-A-disaccharide synthase (364 aa).

This sequence belongs to the LpxB family.

It catalyses the reaction a lipid X + a UDP-2-N,3-O-bis[(3R)-3-hydroxyacyl]-alpha-D-glucosamine = a lipid A disaccharide + UDP + H(+). The protein operates within bacterial outer membrane biogenesis; LPS lipid A biosynthesis. Condensation of UDP-2,3-diacylglucosamine and 2,3-diacylglucosamine-1-phosphate to form lipid A disaccharide, a precursor of lipid A, a phosphorylated glycolipid that anchors the lipopolysaccharide to the outer membrane of the cell. This is Lipid-A-disaccharide synthase from Campylobacter jejuni (strain RM1221).